The sequence spans 78 residues: Large ribosomal subunit protein eL20 (78 aa).

The protein belongs to the eukaryotic ribosomal protein eL20 family. As to quaternary structure, part of the 50S ribosomal subunit. Binds 23S rRNA.

In Pyrobaculum calidifontis (strain DSM 21063 / JCM 11548 / VA1), this protein is Large ribosomal subunit protein eL20.